Consider the following 289-residue polypeptide: ATP synthase gamma chain (289 aa).

Belongs to the ATPase gamma chain family. F-type ATPases have 2 components, CF(1) - the catalytic core - and CF(0) - the membrane proton channel. CF(1) has five subunits: alpha(3), beta(3), gamma(1), delta(1), epsilon(1). CF(0) has three main subunits: a, b and c.

The protein localises to the cell inner membrane. Produces ATP from ADP in the presence of a proton gradient across the membrane. The gamma chain is believed to be important in regulating ATPase activity and the flow of protons through the CF(0) complex. The chain is ATP synthase gamma chain from Histophilus somni (strain 129Pt) (Haemophilus somnus).